The chain runs to 902 residues: Cytosolic 10-formyltetrahydrofolate dehydrogenase (902 aa).

A hydrolase domain region spans residues 1–310; that stretch reads MKIAVIGQSL…PASQFFKGSA (310 aa). At S9 the chain carries Phosphoserine. Residue K38 is modified to N6-succinyllysine. Residue 88–90 participates in (6R)-10-formyltetrahydrofolate binding; that stretch reads QFI. Residue H106 is the Proton donor of the active site. Residue D142 participates in (6R)-10-formyltetrahydrofolate binding. Residues 318–395 form the Carrier domain; the sequence is EEELATAEAV…DFIQLLVRKL (78 aa). Residue S354 is modified to O-(pantetheine 4'-phosphoryl)serine. The segment at 417–902 is aldehyde dehydrogenase domain; that stretch reads TLQMPYQLFI…LRIKTVTFEY (486 aa). Residues 571-573 and 597-600 each bind NADP(+); these read IPW and KPAQ. Residues S629 and S631 each carry the phosphoserine modification. NADP(+) contacts are provided by residues 630-635 and 650-651; these read GSLVGQ and GS. An N6-succinyllysine modification is found at K660. The active-site Proton acceptor is E673. 673–674 serves as a coordination point for NADP(+); sequence EL. C707 serves as the catalytic Proton donor. K757 serves as a coordination point for NADP(+). An N6-succinyllysine modification is found at K767. 804-806 contributes to the NADP(+) binding site; sequence ESF. S825 carries the post-translational modification Phosphoserine. An N6-acetyllysine modification is found at K882.

This sequence in the N-terminal section; belongs to the GART family. In the C-terminal section; belongs to the aldehyde dehydrogenase family. ALDH1L subfamily. In terms of assembly, homotetramer. In terms of processing, phosphopantetheinylation at Ser-354 by AASDHPPT is required for the formyltetrahydrofolate dehydrogenase activity. As to expression, highly expressed in liver (at protein level). Also expressed in pancreas, brain and lung (at protein level).

The protein localises to the cytoplasm. The protein resides in the cytosol. The catalysed reaction is (6R)-10-formyltetrahydrofolate + NADP(+) + H2O = (6S)-5,6,7,8-tetrahydrofolate + CO2 + NADPH + H(+). Functionally, cytosolic 10-formyltetrahydrofolate dehydrogenase that catalyzes the NADP(+)-dependent conversion of 10-formyltetrahydrofolate to tetrahydrofolate and carbon dioxide. May also have an NADP(+)-dependent aldehyde dehydrogenase activity towards formaldehyde, acetaldehyde, propionaldehyde, and benzaldehyde. This chain is Cytosolic 10-formyltetrahydrofolate dehydrogenase, found in Mus musculus (Mouse).